The sequence spans 223 residues: Ribosome maturation factor RimM (223 aa).

Positions alanine 142 to tyrosine 223 constitute a PRC barrel domain.

Belongs to the RimM family. As to quaternary structure, binds ribosomal protein uS19.

The protein resides in the cytoplasm. Functionally, an accessory protein needed during the final step in the assembly of 30S ribosomal subunit, possibly for assembly of the head region. Essential for efficient processing of 16S rRNA. May be needed both before and after RbfA during the maturation of 16S rRNA. It has affinity for free ribosomal 30S subunits but not for 70S ribosomes. The sequence is that of Ribosome maturation factor RimM from Burkholderia multivorans (strain ATCC 17616 / 249).